The sequence spans 320 residues: tRNA pseudouridine synthase B (320 aa).

Asp49 acts as the Nucleophile in catalysis.

This sequence belongs to the pseudouridine synthase TruB family. Type 1 subfamily.

The enzyme catalyses uridine(55) in tRNA = pseudouridine(55) in tRNA. Its function is as follows. Responsible for synthesis of pseudouridine from uracil-55 in the psi GC loop of transfer RNAs. The sequence is that of tRNA pseudouridine synthase B from Bartonella tribocorum (strain CIP 105476 / IBS 506).